A 122-amino-acid polypeptide reads, in one-letter code: Protein FLORAL ORGAN NUMBER2 (122 aa).

The first 25 residues, 1–25 (MGRLFLCLVVAWCWVALLLVAPVHG), serve as a signal peptide directing secretion. A disordered region spans residues 28–122 (GLPGEFSGDQ…PEHARSTGRP (95 aa)). Positions 54-63 (KQPRGVKGTR) are enriched in basic residues. Residues 64 to 77 (RPSWSSWSSTASRS) show a composition bias toward low complexity. Basic and acidic residues predominate over residues 111–122 (RRPEHARSTGRP).

Belongs to the CLV3/ESR signal peptide family.

It localises to the secreted. In terms of biological role, probable extracellular signal that regulates meristem maintenance. May function as a putative ligand for a receptor complex including FON1. Regulates the size of the floral meristem and the number of floral organs. The protein is Protein FLORAL ORGAN NUMBER2 (FON2) of Oryza sativa subsp. indica (Rice).